We begin with the raw amino-acid sequence, 367 residues long: Aminomethyltransferase (367 aa).

Belongs to the GcvT family. As to quaternary structure, the glycine cleavage system is composed of four proteins: P, T, L and H.

The enzyme catalyses N(6)-[(R)-S(8)-aminomethyldihydrolipoyl]-L-lysyl-[protein] + (6S)-5,6,7,8-tetrahydrofolate = N(6)-[(R)-dihydrolipoyl]-L-lysyl-[protein] + (6R)-5,10-methylene-5,6,7,8-tetrahydrofolate + NH4(+). In terms of biological role, the glycine cleavage system catalyzes the degradation of glycine. The sequence is that of Aminomethyltransferase from Mycobacterium leprae (strain Br4923).